An 89-amino-acid chain; its full sequence is Small ribosomal subunit protein uS15 (89 aa).

The protein belongs to the universal ribosomal protein uS15 family. As to quaternary structure, part of the 30S ribosomal subunit. Forms a bridge to the 50S subunit in the 70S ribosome, contacting the 23S rRNA.

Its function is as follows. One of the primary rRNA binding proteins, it binds directly to 16S rRNA where it helps nucleate assembly of the platform of the 30S subunit by binding and bridging several RNA helices of the 16S rRNA. In terms of biological role, forms an intersubunit bridge (bridge B4) with the 23S rRNA of the 50S subunit in the ribosome. This is Small ribosomal subunit protein uS15 from Heliobacterium modesticaldum (strain ATCC 51547 / Ice1).